The chain runs to 186 residues: Peptidyl-tRNA hydrolase (186 aa).

Y14 is a tRNA binding site. The active-site Proton acceptor is the H19. 3 residues coordinate tRNA: Y64, N66, and N112.

It belongs to the PTH family. Monomer.

Its subcellular location is the cytoplasm. The catalysed reaction is an N-acyl-L-alpha-aminoacyl-tRNA + H2O = an N-acyl-L-amino acid + a tRNA + H(+). In terms of biological role, hydrolyzes ribosome-free peptidyl-tRNAs (with 1 or more amino acids incorporated), which drop off the ribosome during protein synthesis, or as a result of ribosome stalling. Its function is as follows. Catalyzes the release of premature peptidyl moieties from peptidyl-tRNA molecules trapped in stalled 50S ribosomal subunits, and thus maintains levels of free tRNAs and 50S ribosomes. The sequence is that of Peptidyl-tRNA hydrolase from Bacillus cereus (strain Q1).